The primary structure comprises 146 residues: Ribonuclease H (146 aa).

The RNase H type-1 domain maps to 1–143 (MKKRVTIYTD…CDELARQAIK (143 aa)). Residues Asp-10, Glu-48, Asp-70, and Asp-135 each coordinate Mg(2+).

This sequence belongs to the RNase H family. In terms of assembly, monomer. Requires Mg(2+) as cofactor.

The protein resides in the cytoplasm. The enzyme catalyses Endonucleolytic cleavage to 5'-phosphomonoester.. Functionally, endonuclease that specifically degrades the RNA of RNA-DNA hybrids. This chain is Ribonuclease H, found in Chlorobium limicola (strain DSM 245 / NBRC 103803 / 6330).